Consider the following 185-residue polypeptide: Elongation factor P (185 aa).

This sequence belongs to the elongation factor P family.

Its subcellular location is the cytoplasm. It participates in protein biosynthesis; polypeptide chain elongation. Involved in peptide bond synthesis. Stimulates efficient translation and peptide-bond synthesis on native or reconstituted 70S ribosomes in vitro. Probably functions indirectly by altering the affinity of the ribosome for aminoacyl-tRNA, thus increasing their reactivity as acceptors for peptidyl transferase. The polypeptide is Elongation factor P (Carboxydothermus hydrogenoformans (strain ATCC BAA-161 / DSM 6008 / Z-2901)).